Consider the following 662-residue polypeptide: Bifunctional polymyxin resistance protein ArnA (662 aa).

The formyltransferase ArnAFT stretch occupies residues 1–307 (MTSKAVVFAY…ELGLVEGARL (307 aa)). Catalysis depends on His-106, which acts as the Proton donor; for formyltransferase activity. Residues Arg-116 and 138 to 142 (VERAD) contribute to the (6R)-10-formyltetrahydrofolate site. Positions 316 to 662 (RRTRVLILGV…EALREREAQA (347 aa)) are dehydrogenase ArnADH. Residues Asp-349 and 370 to 371 (DI) contribute to the NAD(+) site. Residues Ala-395, Tyr-400, and 434–435 (TS) contribute to the UDP-alpha-D-glucuronate site. Residue Glu-436 is the Proton acceptor; for decarboxylase activity of the active site. Residues Arg-462, Asn-493, 527–536 (RLVDGGAQKR), and Tyr-614 contribute to the UDP-alpha-D-glucuronate site. Arg-620 acts as the Proton donor; for decarboxylase activity in catalysis.

In the N-terminal section; belongs to the Fmt family. UDP-L-Ara4N formyltransferase subfamily. The protein in the C-terminal section; belongs to the NAD(P)-dependent epimerase/dehydratase family. UDP-glucuronic acid decarboxylase subfamily. As to quaternary structure, homohexamer, formed by a dimer of trimers.

The enzyme catalyses UDP-alpha-D-glucuronate + NAD(+) = UDP-beta-L-threo-pentopyranos-4-ulose + CO2 + NADH. It catalyses the reaction UDP-4-amino-4-deoxy-beta-L-arabinose + (6R)-10-formyltetrahydrofolate = UDP-4-deoxy-4-formamido-beta-L-arabinose + (6S)-5,6,7,8-tetrahydrofolate + H(+). The protein operates within nucleotide-sugar biosynthesis; UDP-4-deoxy-4-formamido-beta-L-arabinose biosynthesis; UDP-4-deoxy-4-formamido-beta-L-arabinose from UDP-alpha-D-glucuronate: step 1/3. It functions in the pathway nucleotide-sugar biosynthesis; UDP-4-deoxy-4-formamido-beta-L-arabinose biosynthesis; UDP-4-deoxy-4-formamido-beta-L-arabinose from UDP-alpha-D-glucuronate: step 3/3. It participates in bacterial outer membrane biogenesis; lipopolysaccharide biosynthesis. In terms of biological role, bifunctional enzyme that catalyzes the oxidative decarboxylation of UDP-glucuronic acid (UDP-GlcUA) to UDP-4-keto-arabinose (UDP-Ara4O) and the addition of a formyl group to UDP-4-amino-4-deoxy-L-arabinose (UDP-L-Ara4N) to form UDP-L-4-formamido-arabinose (UDP-L-Ara4FN). The modified arabinose is attached to lipid A and is required for resistance to polymyxin and cationic antimicrobial peptides. This Pseudomonas paraeruginosa (strain DSM 24068 / PA7) (Pseudomonas aeruginosa (strain PA7)) protein is Bifunctional polymyxin resistance protein ArnA.